Here is a 396-residue protein sequence, read N- to C-terminus: Ribosomal RNA large subunit methyltransferase I (396 aa).

Residues 2–81 form the PUA domain; that stretch reads TVSIYLAKGR…EAIDKDFFVR (80 aa).

It belongs to the methyltransferase superfamily. RlmI family.

Its subcellular location is the cytoplasm. It carries out the reaction cytidine(1962) in 23S rRNA + S-adenosyl-L-methionine = 5-methylcytidine(1962) in 23S rRNA + S-adenosyl-L-homocysteine + H(+). Specifically methylates the cytosine at position 1962 (m5C1962) of 23S rRNA. The sequence is that of Ribosomal RNA large subunit methyltransferase I from Aliivibrio fischeri (strain ATCC 700601 / ES114) (Vibrio fischeri).